The chain runs to 300 residues: Oxidoreductase BOA1 (300 aa).

This sequence belongs to the NmrA-type oxidoreductase family. Isoflavone reductase subfamily.

It functions in the pathway polyketide biosynthesis. In terms of biological role, oxidoreductase; part of the gene cluster A that mediates the biosynthesis of botcinic acid and its botcinin derivatives, acetate-derived polyketides that contribute to virulence when combined with the sesquiterpene botrydial. Botcinic acid and its derivatives have been shown to induce chlorosis and necrosis during host plant infection, but also have antifungal activities. Two polyketide synthases, BOA6 and BOA9, are involved in the biosynthesis of botcinins. BOA6 mediates the formation of the per-methylated tetraketide core by condensation of four units of malonyl-CoA with one unit of acetyl-CoA, which would be methylated in activated methylene groups to yield a bicyclic acid intermediate that could then either be converted to botrylactone derivatives or lose the starter acetate unit through a retro-Claisen type C-C bond cleavage to yield botcinin derivatives. The second polyketide synthase, BOA9, is probably required for the biosynthesis of the tetraketide side chain of botcinins. The methyltransferase (MT) domain within BOA6 is probably responsible for the incorporation of four methyl groups. The trans-enoyl reductase BOA5 might take over the enoyl reductase function of BOA6 that misses an ER domain. The monooxygenases BOA2, BOA3 and BOA4 might be involved in further hydroxylations at C4, C5 and C8, whereas BOA7, close to BOA9, could potentially be involved in the hydroxylation at C4 in the side chain of botcinins. The chain is Oxidoreductase BOA1 from Botryotinia fuckeliana (strain B05.10) (Noble rot fungus).